We begin with the raw amino-acid sequence, 300 residues long: Zinc finger CCCH domain-containing protein 14 (300 aa).

The interval methionine 1–proline 38 is disordered. C3H1-type zinc fingers lie at residues glycine 33–proline 61 and threonine 99–arginine 127. One can recognise a KH domain in the interval serine 170–valine 234. The interval glycine 243–proline 262 is disordered. The C3H1-type 3 zinc finger occupies asparagine 265 to asparagine 292.

The polypeptide is Zinc finger CCCH domain-containing protein 14 (Oryza sativa subsp. japonica (Rice)).